We begin with the raw amino-acid sequence, 190 residues long: Shikimate kinase (190 aa).

14 to 19 (GSGKST) provides a ligand contact to ATP. Ser18 provides a ligand contact to Mg(2+). The substrate site is built by Asp36, Arg60, and Gly82. An ATP-binding site is contributed by Arg120. A substrate-binding site is contributed by Arg147.

This sequence belongs to the shikimate kinase family. As to quaternary structure, monomer. The cofactor is Mg(2+).

It localises to the cytoplasm. It carries out the reaction shikimate + ATP = 3-phosphoshikimate + ADP + H(+). Its pathway is metabolic intermediate biosynthesis; chorismate biosynthesis; chorismate from D-erythrose 4-phosphate and phosphoenolpyruvate: step 5/7. Catalyzes the specific phosphorylation of the 3-hydroxyl group of shikimic acid using ATP as a cosubstrate. The protein is Shikimate kinase of Chlorobium phaeobacteroides (strain DSM 266 / SMG 266 / 2430).